A 692-amino-acid chain; its full sequence is ATP-dependent DNA helicase DinG (692 aa).

Positions 16-293 (NLGNQLDNFI…AELAEYKKAA (278 aa)) constitute a Helicase ATP-binding domain. 56–63 (AGTGIGKS) provides a ligand contact to ATP. Residue C123 coordinates [4Fe-4S] cluster. The short motif at 134–137 (NNDQ) is the DEAH box element. Positions 192 and 202 each coordinate [4Fe-4S] cluster. The short motif at 247-250 (DEAH) is the DEAH box element. In terms of domain architecture, Helicase C-terminal spans 514 to 692 (LIKTLPEYLE…PPFKRVIEYS (179 aa)).

It belongs to the helicase family. DinG subfamily. Type 1 sub-subfamily. [4Fe-4S] cluster is required as a cofactor.

It catalyses the reaction Couples ATP hydrolysis with the unwinding of duplex DNA at the replication fork by translocating in the 5'-3' direction. This creates two antiparallel DNA single strands (ssDNA). The leading ssDNA polymer is the template for DNA polymerase III holoenzyme which synthesizes a continuous strand.. The catalysed reaction is ATP + H2O = ADP + phosphate + H(+). Functionally, DNA-dependent ATPase and 5'-3' DNA helicase. Unwinds D-loops, R-loops, forked DNA and G-quadruplex DNA. The polypeptide is ATP-dependent DNA helicase DinG (Photobacterium profundum (strain SS9)).